We begin with the raw amino-acid sequence, 290 residues long: Undecaprenyl-diphosphatase (290 aa).

A run of 8 helical transmembrane segments spans residues 5–25, 44–64, 88–108, 122–142, 152–172, 195–215, 226–246, and 255–275; these read IGIF…YFPI, GTAY…TYFY, VRLF…GLAL, LSVI…SESL, IRVI…VPGV, FSFL…LKVL, PIVA…AWLL, and LVFV…LAAG.

The protein belongs to the UppP family.

The protein resides in the cell inner membrane. The enzyme catalyses di-trans,octa-cis-undecaprenyl diphosphate + H2O = di-trans,octa-cis-undecaprenyl phosphate + phosphate + H(+). Its function is as follows. Catalyzes the dephosphorylation of undecaprenyl diphosphate (UPP). Confers resistance to bacitracin. The protein is Undecaprenyl-diphosphatase of Gloeobacter violaceus (strain ATCC 29082 / PCC 7421).